The following is a 96-amino-acid chain: Co-chaperonin GroES (96 aa).

Belongs to the GroES chaperonin family. Heptamer of 7 subunits arranged in a ring. Interacts with the chaperonin GroEL.

It localises to the cytoplasm. Its function is as follows. Together with the chaperonin GroEL, plays an essential role in assisting protein folding. The GroEL-GroES system forms a nano-cage that allows encapsulation of the non-native substrate proteins and provides a physical environment optimized to promote and accelerate protein folding. GroES binds to the apical surface of the GroEL ring, thereby capping the opening of the GroEL channel. This is Co-chaperonin GroES from Aggregatibacter actinomycetemcomitans (Actinobacillus actinomycetemcomitans).